Reading from the N-terminus, the 492-residue chain is Cytochrome P450 26A1 (492 aa).

Cys-437 serves as a coordination point for heme.

Belongs to the cytochrome P450 family. Heme serves as cofactor. In terms of tissue distribution, expressed primarily in ovary, brain and eyes.

It localises to the endoplasmic reticulum membrane. The protein localises to the microsome membrane. It catalyses the reaction all-trans-retinoate + reduced [NADPH--hemoprotein reductase] + O2 = all-trans-(4S)-hydroxyretinoate + oxidized [NADPH--hemoprotein reductase] + H2O + H(+). In terms of biological role, a cytochrome P450 monooxygenase involved in the metabolism of all-trans retinoic acid (atRA), a signaling molecule that binds to retinoic acid receptors and regulates gene transcription. May regulate at-RA signaling during hindbrain development. Mechanistically, uses molecular oxygen inserting one oxygen atom into a substrate, and reducing the second into a water molecule, with two electrons provided by NADPH via cytochrome P450 reductase (CPR; NADPH-ferrihemoprotein reductase). Catalyzes the hydroxylation of carbon hydrogen bonds of atRA primarily at C-4. Has no activity toward 9-cis and 13-cis retinoic acid stereoisomers. May play a role in the oxidative metabolism of xenobiotics such as tazarotenic acid. In Xenopus laevis (African clawed frog), this protein is Cytochrome P450 26A1 (cyp26a1).